Reading from the N-terminus, the 74-residue chain is U4-theraphotoxin-Cg1a (74 aa).

The first 19 residues, 1–19 (MNATIFALLLLLNLAMHNA), serve as a signal peptide directing secretion. Positions 20-39 (AEQSSETDMDDTLLIPEINR) are excised as a propeptide. Disulfide bonds link cysteine 42/cysteine 56, cysteine 49/cysteine 61, and cysteine 55/cysteine 71.

Belongs to the neurotoxin 36 family. 01 subfamily. As to expression, expressed by the venom gland.

It is found in the secreted. Its function is as follows. Probable ion channel inhibitor. The sequence is that of U4-theraphotoxin-Cg1a from Chilobrachys guangxiensis (Chinese earth tiger tarantula).